Reading from the N-terminus, the 143-residue chain is MLMPKRTKHRKMFRGRMKGAAHKGNFVAFGDYGLQALEPSWITNRQIESCRVAINRTFKREGKTYIRIFPDKPITARPAGVRMGKGKGNVEGWVSVVRPGRILFEVSGVTEEKAAAALRKAAMKLPIRCKVVKREEKENGGEN.

Belongs to the universal ribosomal protein uL16 family. Part of the 50S ribosomal subunit.

Binds 23S rRNA and is also seen to make contacts with the A and possibly P site tRNAs. The chain is Large ribosomal subunit protein uL16 from Fusobacterium nucleatum subsp. nucleatum (strain ATCC 25586 / DSM 15643 / BCRC 10681 / CIP 101130 / JCM 8532 / KCTC 2640 / LMG 13131 / VPI 4355).